Reading from the N-terminus, the 456-residue chain is Bifunctional protein GlmU (456 aa).

A pyrophosphorylase region spans residues 1–228 (MKLKAIILAA…YEDIMAVNSR (228 aa)). UDP-N-acetyl-alpha-D-glucosamine-binding positions include 8–11 (LAAG), Lys22, Gln72, 77–78 (GT), 99–101 (YGD), Gly138, Glu153, Asn168, and Asn226. Position 101 (Asp101) interacts with Mg(2+). Residue Asn226 coordinates Mg(2+). Residues 229–249 (EQLAEVEEVMQRRIVKKHMEA) form a linker region. The interval 250–456 (GVTFIDPQST…WVARKGVGKK (207 aa)) is N-acetyltransferase. Positions 331 and 349 each coordinate UDP-N-acetyl-alpha-D-glucosamine. His361 serves as the catalytic Proton acceptor. Positions 364 and 375 each coordinate UDP-N-acetyl-alpha-D-glucosamine. Acetyl-CoA is bound by residues 384–385 (NY), Ser403, Ser421, and Arg438.

In the N-terminal section; belongs to the N-acetylglucosamine-1-phosphate uridyltransferase family. It in the C-terminal section; belongs to the transferase hexapeptide repeat family. As to quaternary structure, homotrimer. The cofactor is Mg(2+).

Its subcellular location is the cytoplasm. The enzyme catalyses alpha-D-glucosamine 1-phosphate + acetyl-CoA = N-acetyl-alpha-D-glucosamine 1-phosphate + CoA + H(+). It carries out the reaction N-acetyl-alpha-D-glucosamine 1-phosphate + UTP + H(+) = UDP-N-acetyl-alpha-D-glucosamine + diphosphate. It functions in the pathway nucleotide-sugar biosynthesis; UDP-N-acetyl-alpha-D-glucosamine biosynthesis; N-acetyl-alpha-D-glucosamine 1-phosphate from alpha-D-glucosamine 6-phosphate (route II): step 2/2. The protein operates within nucleotide-sugar biosynthesis; UDP-N-acetyl-alpha-D-glucosamine biosynthesis; UDP-N-acetyl-alpha-D-glucosamine from N-acetyl-alpha-D-glucosamine 1-phosphate: step 1/1. It participates in bacterial outer membrane biogenesis; LPS lipid A biosynthesis. In terms of biological role, catalyzes the last two sequential reactions in the de novo biosynthetic pathway for UDP-N-acetylglucosamine (UDP-GlcNAc). The C-terminal domain catalyzes the transfer of acetyl group from acetyl coenzyme A to glucosamine-1-phosphate (GlcN-1-P) to produce N-acetylglucosamine-1-phosphate (GlcNAc-1-P), which is converted into UDP-GlcNAc by the transfer of uridine 5-monophosphate (from uridine 5-triphosphate), a reaction catalyzed by the N-terminal domain. This chain is Bifunctional protein GlmU, found in Alkaliphilus metalliredigens (strain QYMF).